The sequence spans 124 residues: Small ribosomal subunit protein uS12 (124 aa).

The disordered stretch occupies residues 105–124 (QGVKNRKQARSRYGAKKEKG). Basic residues predominate over residues 108–118 (KNRKQARSRYG).

This sequence belongs to the universal ribosomal protein uS12 family. In terms of assembly, part of the 30S ribosomal subunit. Contacts proteins S8 and S17. May interact with IF1 in the 30S initiation complex.

In terms of biological role, with S4 and S5 plays an important role in translational accuracy. Interacts with and stabilizes bases of the 16S rRNA that are involved in tRNA selection in the A site and with the mRNA backbone. Located at the interface of the 30S and 50S subunits, it traverses the body of the 30S subunit contacting proteins on the other side and probably holding the rRNA structure together. The combined cluster of proteins S8, S12 and S17 appears to hold together the shoulder and platform of the 30S subunit. In Mycobacterium bovis (strain ATCC BAA-935 / AF2122/97), this protein is Small ribosomal subunit protein uS12 (rpsL).